Reading from the N-terminus, the 467-residue chain is Asparagine--tRNA ligase (467 aa).

The protein belongs to the class-II aminoacyl-tRNA synthetase family. In terms of assembly, homodimer.

The protein localises to the cytoplasm. The enzyme catalyses tRNA(Asn) + L-asparagine + ATP = L-asparaginyl-tRNA(Asn) + AMP + diphosphate + H(+). The sequence is that of Asparagine--tRNA ligase from Actinobacillus succinogenes (strain ATCC 55618 / DSM 22257 / CCUG 43843 / 130Z).